Consider the following 599-residue polypeptide: Kelch-like protein 41a (599 aa).

Residues 32–102 enclose the BTB domain; sequence VDCILKVGDR…LYSADIDITD (71 aa). A BACK domain is found at 137 to 239; that stretch reads CLAIFRMGLV…PEKYLKEKVE (103 aa). 5 Kelch repeats span residues 339–391, 393–440, 441–488, 489–535, and 537–591; these read LLYV…EFEN, LFAV…SQNG, LVYC…VHKG, KIVV…SVDG, and LYAV…SMRL.

The protein resides in the cytoplasm. It localises to the cytoskeleton. The protein localises to the sarcoplasmic reticulum membrane. Its subcellular location is the endoplasmic reticulum membrane. Involved in skeletal muscle development and differentiation. The polypeptide is Kelch-like protein 41a (klhl41a) (Danio rerio (Zebrafish)).